We begin with the raw amino-acid sequence, 134 residues long: Phosphoribosyl-ATP pyrophosphatase 2 (134 aa).

This sequence belongs to the PRA-PH family.

Its subcellular location is the cytoplasm. The enzyme catalyses 1-(5-phospho-beta-D-ribosyl)-ATP + H2O = 1-(5-phospho-beta-D-ribosyl)-5'-AMP + diphosphate + H(+). Its pathway is amino-acid biosynthesis; L-histidine biosynthesis; L-histidine from 5-phospho-alpha-D-ribose 1-diphosphate: step 2/9. This Bradyrhizobium diazoefficiens (strain JCM 10833 / BCRC 13528 / IAM 13628 / NBRC 14792 / USDA 110) protein is Phosphoribosyl-ATP pyrophosphatase 2 (hisE2).